The sequence spans 508 residues: Histidine ammonia-lyase (508 aa).

The 5-imidazolinone (Ala-Gly) cross-link spans Ala-143 to Gly-145. Ser-144 is subject to 2,3-didehydroalanine (Ser).

The protein belongs to the PAL/histidase family. Post-translationally, contains an active site 4-methylidene-imidazol-5-one (MIO), which is formed autocatalytically by cyclization and dehydration of residues Ala-Ser-Gly.

Its subcellular location is the cytoplasm. It carries out the reaction L-histidine = trans-urocanate + NH4(+). Its pathway is amino-acid degradation; L-histidine degradation into L-glutamate; N-formimidoyl-L-glutamate from L-histidine: step 1/3. The chain is Histidine ammonia-lyase from Anaeromyxobacter dehalogenans (strain 2CP-C).